The sequence spans 505 residues: Alpha-1-syntrophin (505 aa).

Residues 1–77 (MASGRRAPRT…AEPGAASPPL (77 aa)) are disordered. 2 PH domains span residues 6 to 269 (RAPR…AQVN) and 293 to 401 (DIKR…DGCH). The region spanning 87–170 (RVTVRKADAG…EVVLEVKYMK (84 aa)) is the PDZ domain. Phosphoserine is present on residues Ser-101, Ser-184, Ser-189, Ser-193, and Ser-200. The interval 180 to 211 (ASGTSVGWDSPPASPLQRQPSSPGPPPRDLRD) is disordered. The SU domain occupies 449-505 (PFEKLQMSSDDGASLLFLDFGGAEGEIQLDLHSCPKTMVFIIHSFLSAKVTRLGLLA). Positions 483–505 (PKTMVFIIHSFLSAKVTRLGLLA) are calmodulin-binding.

This sequence belongs to the syntrophin family. Monomer and homodimer. Interacts with the dystrophin related protein DTNA; SGCG of the dystrophin glycoprotein complex; NOS1; GRB2; GA; TGFA; MAPK12 and the sodium channel proteins SCN4A and SCN5A. Interacts with the dystrophin protein DMD in a calmodulin dependent manner and with related protein UTRN; SGCA of the dystrophin glycoprotein complex; F-actin; calmodulin and with the other members of the syntrophin family SNTB1 and SNTB2. Interacts with MYOC; regulates muscle hypertrophy. Interacts with DTNB. Phosphorylated by CaM-kinase II. Phosphorylation may inhibit the interaction with DMD.

The protein resides in the cell membrane. The protein localises to the sarcolemma. It localises to the cell junction. Its subcellular location is the cytoplasm. It is found in the cytoskeleton. Its function is as follows. Adapter protein that binds to and probably organizes the subcellular localization of a variety of membrane proteins. May link various receptors to the actin cytoskeleton and the extracellular matrix via the dystrophin glycoprotein complex. Plays an important role in synapse formation and in the organization of UTRN and acetylcholine receptors at the neuromuscular synapse. Binds to phosphatidylinositol 4,5-bisphosphate. In Bos taurus (Bovine), this protein is Alpha-1-syntrophin (SNTA1).